We begin with the raw amino-acid sequence, 179 residues long: Large ribosomal subunit protein uL5 (179 aa).

The protein belongs to the universal ribosomal protein uL5 family. As to quaternary structure, part of the 50S ribosomal subunit; part of the 5S rRNA/L5/L18/L25 subcomplex. Contacts the 5S rRNA and the P site tRNA. Forms a bridge to the 30S subunit in the 70S ribosome.

Functionally, this is one of the proteins that bind and probably mediate the attachment of the 5S RNA into the large ribosomal subunit, where it forms part of the central protuberance. In the 70S ribosome it contacts protein S13 of the 30S subunit (bridge B1b), connecting the 2 subunits; this bridge is implicated in subunit movement. Contacts the P site tRNA; the 5S rRNA and some of its associated proteins might help stabilize positioning of ribosome-bound tRNAs. The polypeptide is Large ribosomal subunit protein uL5 (Burkholderia mallei (strain ATCC 23344)).